We begin with the raw amino-acid sequence, 379 residues long: MAKRDYYEVLGVSRDAEEREIKKAYKRLAMKFHPDRKSEDKNAEEKFKEAKEAYEILTDAQKRAAYDQYGHAAFEQGGMGGGGFGGGGGGADFSDIFGDVFGDIFGGGRRQQRASRGSDLRYNMDLTLEEAVRGVTKEIRIPTLDECDVCHGSGAKPGSSPVTCPTCHGAGQVQMRQGFFTVQQACPHCHGRGQIIKDPCNKCHGHGRVEKSKTLSVKIPAGVDTGDRIRLSGEGEAGEHGAPSGDLYVQVQVKAHPIFEREGNNLYCEVPINFAMAALGGEIEVPTLDGRVKLKIPAETQTGKMFRMRGKGVKSVRGGSQGDLLCRVVVETPVSLSEKQKQLLRELEESFVGAAGEKNSPRAKSFLDGVKKFFDDLTR.

One can recognise a J domain in the interval 5 to 70 (DYYEVLGVSR…QKRAAYDQYG (66 aa)). A CR-type zinc finger spans residues 134-212 (GVTKEIRIPT…CHGHGRVEKS (79 aa)). Zn(2+)-binding residues include Cys-147, Cys-150, Cys-164, Cys-167, Cys-186, Cys-189, Cys-200, and Cys-203. 4 CXXCXGXG motif repeats span residues 147–154 (CDVCHGSG), 164–171 (CPTCHGAG), 186–193 (CPHCHGRG), and 200–207 (CNKCHGHG).

It belongs to the DnaJ family. As to quaternary structure, homodimer. It depends on Zn(2+) as a cofactor.

The protein localises to the cytoplasm. In terms of biological role, participates actively in the response to hyperosmotic and heat shock by preventing the aggregation of stress-denatured proteins and by disaggregating proteins, also in an autonomous, DnaK-independent fashion. Unfolded proteins bind initially to DnaJ; upon interaction with the DnaJ-bound protein, DnaK hydrolyzes its bound ATP, resulting in the formation of a stable complex. GrpE releases ADP from DnaK; ATP binding to DnaK triggers the release of the substrate protein, thus completing the reaction cycle. Several rounds of ATP-dependent interactions between DnaJ, DnaK and GrpE are required for fully efficient folding. Also involved, together with DnaK and GrpE, in the DNA replication of plasmids through activation of initiation proteins. The sequence is that of Chaperone protein DnaJ from Yersinia pseudotuberculosis serotype O:1b (strain IP 31758).